A 474-amino-acid chain; its full sequence is Lysosomal protective protein (474 aa).

The signal sequence occupies residues 1–23 (MPGTALSPLLLLLLLSWASRNEA). 4 cysteine pairs are disulfide-bonded: C83–C356, C235–C251, C236–C241, and C276–C325. The N-linked (GlcNAc...) (high mannose) asparagine glycan is linked to N140. Residue S173 is part of the active site. Residue N327 is glycosylated (N-linked (GlcNAc...) (high mannose) asparagine). Residues D394 and H451 contribute to the active site.

The protein belongs to the peptidase S10 family. Heterodimer of a 32 kDa chain and a 20 kDa chain; disulfide-linked.

It localises to the lysosome. The catalysed reaction is Release of a C-terminal amino acid with broad specificity.. Functionally, protective protein appears to be essential for both the activity of beta-galactosidase and neuraminidase, it associates with these enzymes and exerts a protective function necessary for their stability and activity. This protein is also a carboxypeptidase and can deamidate tachykinins. The protein is Lysosomal protective protein (Ctsa) of Mus musculus (Mouse).